Reading from the N-terminus, the 605-residue chain is MYLNALAKVRRGGGGGRPAAGGRPAAGGRPAAGGRPAAGSRAAAGAAGPPKPAKTVRGTVRPRGFGGGRFPPRRFPPAPVDEATREAEKILKSIHAHKVVKLPAQRKKHRGLYKTVRHTMPPDYIPVLGAEVLAGISSPDVMQAVLRIAPTRDNTQAADAMLCATILRAMPYKMVHPFLDMAAEGKDRHANVVLRDTFFPQNARTMDEFKAFMRRRAPDCPSPRTPMVKPPFRIPDAKPGLTPSVRNPRLNIPETAMVSIMTSAPWVAGHSIKGTVLPEGSTGALRGGLASRRWYVDNWVSVRMMGNPPVEYLTFSGKRIPETREMYDAYVRHLQSFGATAVSSSPSPPPNGDAATALANMYVDTGPEYLAALVRALPSGSGAEYEAALAYTVARAVPVFSNGETLHQIRLREGRYRPDGVHGLSDDIAFAEVYSDPDMVAEWKPRLDRIIKARVSEVIAAYRRLATGDLTAKRTPELALSSRIPAPAGLLFPKAFGESAVIRTSRGRRLVIARARRDAPAVLTDLLSVLITPMYPATAEPQRVASDDPTVLGDEPVAAAVEEPRGQAFRRKWGRGVGGKLLDALENYMDAIQQGRLPPYDNDME.

Disordered stretches follow at residues 10–78 (RRGG…FPPA) and 216–248 (RAPD…VRNP). Residues 20 to 48 (AGGRPAAGGRPAAGGRPAAGSRAAAGAAG) show a composition bias toward low complexity. Residues 220–233 (CPSPRTPMVKPPFR) show a composition bias toward pro residues.

This is an uncharacterized protein from Dryophytes versicolor (chameleon treefrog).